Reading from the N-terminus, the 620-residue chain is NADPH-dependent diflavin oxidoreductase 1 (620 aa).

A Flavodoxin-like domain is found at 6 to 168 (IAILYGSETG…VYSEFEKRVL (163 aa)). FMN contacts are provided by residues 12-17 (SETGTA), 59-62 (STTG), and 106-115 (LGDSSYSKFN). Residues 222–475 (SSVKYGTVVT…LLPAGKQDRP (254 aa)) enclose the FAD-binding FR-type domain. FAD-binding positions include Arg-380, 410 to 413 (RFFS), and 442 to 445 (GLCT). 535–536 (SR) is an NADP(+) binding site. Trp-620 is an FAD binding site.

Belongs to the NADPH-dependent diflavin oxidoreductase NDOR1 family. The protein in the N-terminal section; belongs to the flavodoxin family. It in the C-terminal section; belongs to the flavoprotein pyridine nucleotide cytochrome reductase family. As to quaternary structure, interacts with DRE2; as part of the cytosolic iron-sulfur (Fe-S) protein assembly (CIA) machinery. FAD is required as a cofactor. Requires FMN as cofactor.

It localises to the cytoplasm. Its subcellular location is the mitochondrion. The enzyme catalyses 2 oxidized [2Fe-2S]-[protein] + NADPH = 2 reduced [2Fe-2S]-[protein] + NADP(+) + H(+). Functionally, NADPH-dependent reductase which is a central component of the cytosolic iron-sulfur (Fe-S) protein assembly (CIA) machinery. Transfers electrons from NADPH via its FAD and FMN prosthetic groups to the [2Fe-2S] cluster of DRE2, another key component of the CIA machinery. In turn, this reduced cluster provides electrons for assembly of cytosolic iron-sulfur cluster proteins. Positively controls H(2)O(2)-induced cell death. The sequence is that of NADPH-dependent diflavin oxidoreductase 1 from Eremothecium gossypii (strain ATCC 10895 / CBS 109.51 / FGSC 9923 / NRRL Y-1056) (Yeast).